We begin with the raw amino-acid sequence, 228 residues long: Phosphatidylglycerophosphate phosphatase PTPMT2 (228 aa).

Positions 1–10 are enriched in acidic residues; that stretch reads MTDETEEDDT. The disordered stretch occupies residues 1–30; the sequence is MTDETEEDDTTQQRSSRNDGVSKNKGKGFK. Residues tyrosine 48 and aspartate 126 each contribute to the substrate site. The Tyrosine-protein phosphatase domain maps to 66–213; the sequence is WWDQIDEYLL…VEEFSRLQSP (148 aa). The active-site Phosphocysteine intermediate is the cysteine 157. Positions 157 to 163 match the Glucan phosphatase signature motif CXAGXGR motif; the sequence is CKAGRGR. 158 to 163 serves as a coordination point for substrate; the sequence is KAGRGR.

The protein belongs to the protein-tyrosine phosphatase family. Non-receptor class dual specificity subfamily. In terms of tissue distribution, expressed in roots, leaves, stems and flowers. As to expression, expressed at low levels in stems and flowers.

The enzyme catalyses O-phospho-L-seryl-[protein] + H2O = L-seryl-[protein] + phosphate. The catalysed reaction is O-phospho-L-threonyl-[protein] + H2O = L-threonyl-[protein] + phosphate. It carries out the reaction O-phospho-L-tyrosyl-[protein] + H2O = L-tyrosyl-[protein] + phosphate. It catalyses the reaction a 1,2-diacyl-sn-glycero-3-phospho-(1'-sn-glycero-3'-phosphate) + H2O = a 1,2-diacyl-sn-glycero-3-phospho-(1'-sn-glycerol) + phosphate. The protein operates within phospholipid metabolism; phosphatidylglycerol biosynthesis; phosphatidylglycerol from CDP-diacylglycerol: step 2/2. Exhibits phosphatidylglycerophosphate phosphatase activity. Involved in root growth and columella cells organization. May possess protein phosphatase activity. This chain is Phosphatidylglycerophosphate phosphatase PTPMT2, found in Arabidopsis thaliana (Mouse-ear cress).